We begin with the raw amino-acid sequence, 388 residues long: 3-ketoacyl-CoA thiolase (388 aa).

The active-site Acyl-thioester intermediate is cysteine 91. Active-site proton acceptor residues include histidine 343 and cysteine 373.

This sequence belongs to the thiolase-like superfamily. Thiolase family. In terms of assembly, heterotetramer of two alpha chains (FadB) and two beta chains (FadA).

It localises to the cytoplasm. The enzyme catalyses an acyl-CoA + acetyl-CoA = a 3-oxoacyl-CoA + CoA. The protein operates within lipid metabolism; fatty acid beta-oxidation. In terms of biological role, catalyzes the final step of fatty acid oxidation in which acetyl-CoA is released and the CoA ester of a fatty acid two carbons shorter is formed. This chain is 3-ketoacyl-CoA thiolase, found in Photorhabdus laumondii subsp. laumondii (strain DSM 15139 / CIP 105565 / TT01) (Photorhabdus luminescens subsp. laumondii).